We begin with the raw amino-acid sequence, 196 residues long: ATP-dependent Clp protease proteolytic subunit (196 aa).

Ser97 functions as the Nucleophile in the catalytic mechanism. The active site involves His122.

The protein belongs to the peptidase S14 family. Fourteen ClpP subunits assemble into 2 heptameric rings which stack back to back to give a disk-like structure with a central cavity, resembling the structure of eukaryotic proteasomes.

It localises to the cytoplasm. It carries out the reaction Hydrolysis of proteins to small peptides in the presence of ATP and magnesium. alpha-casein is the usual test substrate. In the absence of ATP, only oligopeptides shorter than five residues are hydrolyzed (such as succinyl-Leu-Tyr-|-NHMec, and Leu-Tyr-Leu-|-Tyr-Trp, in which cleavage of the -Tyr-|-Leu- and -Tyr-|-Trp bonds also occurs).. Its function is as follows. Cleaves peptides in various proteins in a process that requires ATP hydrolysis. Has a chymotrypsin-like activity. Plays a major role in the degradation of misfolded proteins. The chain is ATP-dependent Clp protease proteolytic subunit from Lacticaseibacillus paracasei (strain ATCC 334 / BCRC 17002 / CCUG 31169 / CIP 107868 / KCTC 3260 / NRRL B-441) (Lactobacillus paracasei).